A 103-amino-acid polypeptide reads, in one-letter code: uncharacterized protein (103 aa).

3 helical membrane-spanning segments follow: residues 1–21, 29–49, and 69–89; these read MPGVIFWTIFIIQFMIWVFLS, IAFIWGTMPFLALYLKYTGYF, and VVEWSYLVVQTTVPSWIGLLF.

It is found in the cell membrane. This is an uncharacterized protein from Methanocaldococcus jannaschii (strain ATCC 43067 / DSM 2661 / JAL-1 / JCM 10045 / NBRC 100440) (Methanococcus jannaschii).